Reading from the N-terminus, the 425-residue chain is Serine--tRNA ligase (425 aa).

228 to 230 is an L-serine binding site; it reads TAE. 259 to 261 serves as a coordination point for ATP; that stretch reads RSE. An L-serine-binding site is contributed by glutamate 282. Position 346–349 (346–349) interacts with ATP; that stretch reads EIAS. Serine 382 is a binding site for L-serine.

The protein belongs to the class-II aminoacyl-tRNA synthetase family. Type-1 seryl-tRNA synthetase subfamily. Homodimer. The tRNA molecule binds across the dimer.

Its subcellular location is the cytoplasm. It catalyses the reaction tRNA(Ser) + L-serine + ATP = L-seryl-tRNA(Ser) + AMP + diphosphate + H(+). The catalysed reaction is tRNA(Sec) + L-serine + ATP = L-seryl-tRNA(Sec) + AMP + diphosphate + H(+). The protein operates within aminoacyl-tRNA biosynthesis; selenocysteinyl-tRNA(Sec) biosynthesis; L-seryl-tRNA(Sec) from L-serine and tRNA(Sec): step 1/1. In terms of biological role, catalyzes the attachment of serine to tRNA(Ser). Is also able to aminoacylate tRNA(Sec) with serine, to form the misacylated tRNA L-seryl-tRNA(Sec), which will be further converted into selenocysteinyl-tRNA(Sec). The polypeptide is Serine--tRNA ligase (Rickettsia akari (strain Hartford)).